Reading from the N-terminus, the 990-residue chain is MGPLVEATEFSKEQALTDAAENLLKPHFSTDATLSLLEVMESLLATVEQDLSSSVQKALHPPMRALVSADLLRNPDSDVRVSVVSCLTEIMRITAPEAPYNDEQMKDIFQVTIEAFEKLADASSRSYRKAEVILETVAKVRSSLVMLDLECDDLVLEMFQRFLKIIRPDHPQLVLVSMETIMITVIDESEEVPMDLLEILLTTVKKDSQDVSPAALTLVEKVLSSCTCKLQPCIMEALKSSGTSLDMYSPVVSSICQSEFATTQAHNDVKPKDNEADEKISEGQVVPSDSLEDKLNLGLSRKGTRSKRSARGGTRRANGDEKVITANEGLSESTDAETASGSTRKRGWKPKSLMNPEEGYSFKTSSSKKVQEKELGDSSLGKVAAKKVPLPSKVGQTNQSVVISLSSSGRARTGSRKRSRTKMEETDHDVSSVATQPAKKQTVKKTNPAKEDLTKSNVKKHEDGIKTGKSSKKEKADNGLAKTSAKKPLAETMMVKPSGKKLVHSDAKKKNSEGASMDTPIPQSSKSKKKDSRATTPATKKSEQAPKSHPKMKRIAGEEVESNTNELGEELVGKRVNVWWPLDKKFYEGVIKSYCRVKKMHQVTYSDGDVEELNLKKERFKIIEDKSSASEDKEDDLLESTPLSAFIQREKSKKRKIVSKNVEPSSSPEVRSSMQTMKKKDSVTDSIKQTKRTKGALKAVSNEPESTTGKNLKSLKKLNGEPDKTRGRTGKKQKVTQAMHRKIEKDCDEQEDLETKDEEDSLKLGKESDAEPDRMEDHQELPENHNVETKTDGEEQEAAKEPTAESKTNGEEPNAEPETDGKEHKSLKEPNAEPKSDGEEQEAAKEPNAELKTDGENQEAAKELTAERKTDEEEHKVADEVEQKSQKETNVEPEAEGEEQKSVEEPNAEPKTKVEEKESAKEQTADTKLIEKEDMSKTKGEEIDKETYSSIPETGKVGNEAEEDDQRVIKELEEESDKAEVSTTVLEVDP.

HEAT repeat units follow at residues 31–57 (DATLSLLEVMESLLATVEQDLSSSVQK), 58–96 (ALHPPMRALVSADLLRNPDSDVRVSVVSCLTEIMRITAP), 153–190 (DLVLEMFQRFLKIIRPDHPQLVLVSMETIMITVIDESE), 191–228 (EVPMDLLEILLTTVKKDSQDVSPAALTLVEKVLSSCTC), and 232–269 (PCIMEALKSSGTSLDMYSPVVSSICQSEFATTQAHNDV). The disordered stretch occupies residues 262–565 (TTQAHNDVKP…AGEEVESNTN (304 aa)). A compositionally biased stretch (basic and acidic residues) spans 267 to 281 (NDVKPKDNEADEKIS). Positions 302–314 (KGTRSKRSARGGT) are enriched in basic residues. Composition is skewed to polar residues over residues 328–342 (EGLSESTDAETASGS) and 394–410 (VGQTNQSVVISLSSSGR). 3 stretches are compositionally biased toward basic and acidic residues: residues 421–430 (TKMEETDHDV), 448–477 (PAKEDLTKSNVKKHEDGIKTGKSSKKEKAD), and 503–512 (VHSDAKKKNS). The Nuclear localization signal 1 signature appears at 458-465 (VKKHEDGI). 2 short sequence motifs (nuclear localization signal) span residues 539-546 (TKKSEQAP) and 583-590 (DKKFYEGV). Residues 653–966 (KKRKIVSKNV…VGNEAEEDDQ (314 aa)) form a disordered region. Positions 662-673 (VEPSSSPEVRSS) are enriched in low complexity. Short sequence motifs (nuclear localization signal) lie at residues 677 to 684 (MKKKDSVT) and 715 to 722 (LKKLNGEP). Residues 727-742 (GRTGKKQKVTQAMHRK) show a composition bias toward basic residues. A compositionally biased stretch (acidic residues) spans 746-760 (DCDEQEDLETKDEED). 3 stretches are compositionally biased toward basic and acidic residues: residues 761 to 810 (SLKL…KTNG), 819 to 890 (TDGK…KETN), and 898 to 947 (EEQK…DKET).

The protein belongs to the PDS5 family. As to quaternary structure, interacts with the cohesin complex.

It is found in the nucleus. Functionally, cohesin cofactor dispensable during the meiotic division but playing an important role in DNA repair by homologous recombination (HR) probably by helping SMC5/SMC6 complex. Regulator of sister chromatid cohesion in mitosis which may stabilize cohesin complex association with chromatin. May couple sister chromatid cohesion during mitosis to DNA replication. Cohesion ensures that chromosome partitioning is accurate in both meiotic and mitotic cells and plays an important role in DNA repair. This is Sister chromatid cohesion protein PDS5 homolog E from Arabidopsis thaliana (Mouse-ear cress).